Consider the following 620-residue polypeptide: Threonine--tRNA ligase (620 aa).

An editing domain region spans residues 1–141 (MKMLLIHSDY…LSRKIVAKEE (141 aa)). The segment at 197 to 496 (PHVKFIKEKD…AEKGNAPMLP (300 aa)) is catalytic. The Zn(2+) site is built by C289, H341, and H465.

The protein belongs to the class-II aminoacyl-tRNA synthetase family. In terms of assembly, homodimer. It depends on Zn(2+) as a cofactor.

Its subcellular location is the cytoplasm. It carries out the reaction tRNA(Thr) + L-threonine + ATP = L-threonyl-tRNA(Thr) + AMP + diphosphate + H(+). With respect to regulation, not inhibited by 1 uM borrelidin (BN); probably does not bind BN. Functionally, catalyzes the attachment of threonine to tRNA(Thr) in a two-step reaction: L-threonine is first activated by ATP to form Thr-AMP and then transferred to the acceptor end of tRNA(Thr). Also activates L-serine, but does not detectably transfer it to tRNA(Thr). Edits incorrectly charged L-seryl-tRNA(Thr) via its editing domain. Has no activity on correctly acylated L-seryl-tRNA(Ser) or L-threonyl-tRNA(Thr). Deacylates correctly charged glycyl-tRNA(Gly), but not glycyl-tRNA(Gly)(2'-dA76) (the terminal 2'-OH of tRNA adenine 76 has been dehydroxylated) nor the 2'-fluoro tRNA derivative, strongly suggesting the editing function is tRNA catalyzed. This chain is Threonine--tRNA ligase, found in Methanocaldococcus jannaschii (strain ATCC 43067 / DSM 2661 / JAL-1 / JCM 10045 / NBRC 100440) (Methanococcus jannaschii).